Here is a 444-residue protein sequence, read N- to C-terminus: Tubulin beta-7 chain (444 aa).

The GTP site is built by Q11, E69, S138, G142, T143, G144, N204, and N226. E69 is a Mg(2+) binding site.

It belongs to the tubulin family. Dimer of alpha and beta chains. A typical microtubule is a hollow water-filled tube with an outer diameter of 25 nm and an inner diameter of 15 nM. Alpha-beta heterodimers associate head-to-tail to form protofilaments running lengthwise along the microtubule wall with the beta-tubulin subunit facing the microtubule plus end conferring a structural polarity. Microtubules usually have 13 protofilaments but different protofilament numbers can be found in some organisms and specialized cells. It depends on Mg(2+) as a cofactor. In terms of tissue distribution, expressed in roots, leaf sheaths, and suspension cultured cells.

The protein resides in the cytoplasm. It is found in the cytoskeleton. In terms of biological role, tubulin is the major constituent of microtubules, a cylinder consisting of laterally associated linear protofilaments composed of alpha- and beta-tubulin heterodimers. Microtubules grow by the addition of GTP-tubulin dimers to the microtubule end, where a stabilizing cap forms. Below the cap, tubulin dimers are in GDP-bound state, owing to GTPase activity of alpha-tubulin. This Oryza sativa subsp. japonica (Rice) protein is Tubulin beta-7 chain (TUBB7).